Consider the following 602-residue polypeptide: Sulfite reductase [NADPH] hemoprotein beta-component (602 aa).

Residues 1 to 23 are disordered; the sequence is MDDTKTASPAPARAYETPPAERP. Cys-458, Cys-464, Cys-503, and Cys-507 together coordinate [4Fe-4S] cluster. Cys-507 is a binding site for siroheme.

It belongs to the nitrite and sulfite reductase 4Fe-4S domain family. As to quaternary structure, alpha(8)-beta(8). The alpha component is a flavoprotein, the beta component is a hemoprotein. Siroheme is required as a cofactor. Requires [4Fe-4S] cluster as cofactor.

It catalyses the reaction hydrogen sulfide + 3 NADP(+) + 3 H2O = sulfite + 3 NADPH + 4 H(+). It functions in the pathway sulfur metabolism; hydrogen sulfide biosynthesis; hydrogen sulfide from sulfite (NADPH route): step 1/1. Its function is as follows. Component of the sulfite reductase complex that catalyzes the 6-electron reduction of sulfite to sulfide. This is one of several activities required for the biosynthesis of L-cysteine from sulfate. The sequence is that of Sulfite reductase [NADPH] hemoprotein beta-component from Methylobacterium sp. (strain 4-46).